Consider the following 189-residue polypeptide: Adenine phosphoribosyltransferase (189 aa).

This sequence belongs to the purine/pyrimidine phosphoribosyltransferase family. Homodimer.

Its subcellular location is the cytoplasm. The enzyme catalyses AMP + diphosphate = 5-phospho-alpha-D-ribose 1-diphosphate + adenine. Its pathway is purine metabolism; AMP biosynthesis via salvage pathway; AMP from adenine: step 1/1. Catalyzes a salvage reaction resulting in the formation of AMP, that is energically less costly than de novo synthesis. The protein is Adenine phosphoribosyltransferase of Frankia alni (strain DSM 45986 / CECT 9034 / ACN14a).